The chain runs to 385 residues: 8-amino-7-oxononanoate synthase (385 aa).

Position 21 (Arg21) interacts with substrate. 108–109 (GF) is a pyridoxal 5'-phosphate binding site. His133 is a binding site for substrate. Residues Ser179, His207, and Thr233 each contribute to the pyridoxal 5'-phosphate site. Position 236 is an N6-(pyridoxal phosphate)lysine (Lys236). Position 352 (Thr352) interacts with substrate.

It belongs to the class-II pyridoxal-phosphate-dependent aminotransferase family. BioF subfamily. As to quaternary structure, homodimer. Requires pyridoxal 5'-phosphate as cofactor.

The enzyme catalyses 6-carboxyhexanoyl-[ACP] + L-alanine + H(+) = (8S)-8-amino-7-oxononanoate + holo-[ACP] + CO2. It functions in the pathway cofactor biosynthesis; biotin biosynthesis. In terms of biological role, catalyzes the decarboxylative condensation of pimeloyl-[acyl-carrier protein] and L-alanine to produce 8-amino-7-oxononanoate (AON), [acyl-carrier protein], and carbon dioxide. The polypeptide is 8-amino-7-oxononanoate synthase (Salmonella dublin (strain CT_02021853)).